The sequence spans 2351 residues: Coagulation factor VIII (2351 aa).

Positions 1–19 (MQIELSTCFFLCLLRFCFS) are cleaved as a signal peptide. 2 Plastocyanin-like domains span residues 20–198 (ATRR…LLVC) and 206–348 (EKTQ…VDSC). In terms of domain architecture, F5/8 type A 1 spans 20-348 (ATRRYYLGAV…MEAYVKVDSC (329 aa)). N-linked (GlcNAc...) asparagine glycosylation is present at Asn-60. Residues Cys-172 and Cys-198 are joined by a disulfide bond. Asn-258 carries N-linked (GlcNAc...) asparagine glycosylation. Cys-267 and Cys-348 are oxidised to a cystine. Tyr-365 carries the post-translational modification Sulfotyrosine. 2 Plastocyanin-like domains span residues 399–573 (KTWV…LLIC) and 583–730 (NQIM…VSSC). The F5/8 type A 2 domain maps to 399–730 (KTWVHYIAAE…MTALLKVSSC (332 aa)). Residues Cys-547 and Cys-573 are joined by a disulfide bond. Asn-601 carries N-linked (GlcNAc...) asparagine glycosylation. A disulfide bridge links Cys-649 with Cys-730. Sulfotyrosine occurs at positions 737, 738, and 742. Residues 760–1667 (SFSQNSRHPS…NPPVLKRHQR (908 aa)) are b. N-linked (GlcNAc...) asparagine glycans are attached at residues Asn-776, Asn-803, Asn-847, and Asn-919. Disordered stretches follow at residues 906 to 928 (STIP…PPSM) and 941 to 961 (FGKK…SEEN). Residues Asn-962, Asn-982, Asn-1020, Asn-1024, Asn-1074, Asn-1085, Asn-1204, Asn-1274, Asn-1278, Asn-1301, Asn-1319, Asn-1431, and Asn-1461 are each glycosylated (N-linked (GlcNAc...) asparagine). Residues Tyr-1683 and Tyr-1699 each carry the sulfotyrosine modification. Plastocyanin-like domains are found at residues 1713–1877 (KTRH…LLVC) and 1887–2040 (GRQV…SNKC). An F5/8 type A 3 domain is found at 1713 to 2040 (KTRHYFIAAV…TLFLVYSNKC (328 aa)). Asn-1829 carries an N-linked (GlcNAc...) asparagine glycan. Disulfide bonds link Cys-1851-Cys-1877, Cys-1918-Cys-1922, Cys-2040-Cys-2188, and Cys-2193-Cys-2345. F5/8 type C domains are found at residues 2040–2188 (CQTP…LMGC) and 2193–2345 (CSMP…VLGC). N-linked (GlcNAc...) asparagine glycosylation is present at Asn-2137.

It belongs to the multicopper oxidase family. In terms of assembly, interacts with VWF/vWF. vWF binding is essential for the stabilization of F8 in circulation. Sulfation on Tyr-1699 is essential for binding vWF. In terms of processing, proteolytically cleaved by cathepsin CTSG to produce a partially activated form.

The protein resides in the secreted. It is found in the extracellular space. Factor VIII, along with calcium and phospholipid, acts as a cofactor for F9/factor IXa when it converts F10/factor X to the activated form, factor Xa. This chain is Coagulation factor VIII (F8), found in Homo sapiens (Human).